Reading from the N-terminus, the 976-residue chain is Protein phosphatase 1 regulatory subunit 12B (976 aa).

A compositionally biased stretch (basic and acidic residues) spans Met-1–Arg-24. A disordered region spans residues Met-1–Pro-52. Ser-29 bears the Phosphoserine mark. ANK repeat units lie at residues Glu-57–Thr-86, Asp-90–Gln-119, Glu-123–Ile-152, Ser-216–Val-245, and Asp-249–Ile-278. The segment at Glu-342–Asn-489 is disordered. A compositionally biased stretch (acidic residues) spans Ser-362–Ser-374. Basic and acidic residues predominate over residues Glu-375–Glu-385. Residues Phe-411–Phe-423 are compositionally biased toward low complexity. The residue at position 444 (Thr-444) is a Phosphothreonine. A compositionally biased stretch (low complexity) spans Ser-465 to Ser-477. The span at Leu-480 to Asn-489 shows a compositional bias: basic and acidic residues. Residue Ser-502 is modified to Phosphoserine. Residues Ser-503–Asn-873 are disordered. Residues Glu-538–Ser-564 are compositionally biased toward polar residues. The segment covering Val-622 to Arg-631 has biased composition (basic and acidic residues). Residues Lys-632 to Arg-642 show a composition bias toward basic residues. Residue Thr-645 is modified to Phosphothreonine. Residues Glu-655–Asp-679 show a composition bias toward basic and acidic residues. Composition is skewed to polar residues over residues Asp-722–Thr-739 and Ser-747–Ala-763. Over residues Ala-765–Ala-777 the composition is skewed to basic and acidic residues. Positions Glu-791–Gly-801 are enriched in basic residues. Thr-802 is subject to Phosphothreonine. A compositionally biased stretch (basic and acidic residues) spans Glu-818–Arg-830. Ser-833 is subject to Phosphoserine. Residues Tyr-844–Arg-860 show a composition bias toward basic and acidic residues. Ser-941 carries the post-translational modification Phosphoserine.

As to quaternary structure, PP1 comprises a catalytic subunit, PPP1CA, PPP1CB or PPP1CC, and one or several targeting or regulatory subunits. PPP1R12B mediates binding to myosin. Isoform 3 and isoform 4 bind PPP1R12A, but not isoform 1 of PPP1R12B itself. Binds IL16.

The protein resides in the cytoplasm. It is found in the cytoskeleton. Its subcellular location is the stress fiber. In terms of biological role, regulates myosin phosphatase activity. Augments Ca(2+) sensitivity of the contractile apparatus. In Mus musculus (Mouse), this protein is Protein phosphatase 1 regulatory subunit 12B (Ppp1r12b).